We begin with the raw amino-acid sequence, 440 residues long: Platelet-activating factor acetylhydrolase (440 aa).

A signal peptide spans 1-21 (MVPLKLQALFCLLCCLPWVHP). Asparagine 59, asparagine 75, and asparagine 199 each carry an N-linked (GlcNAc...) asparagine glycan. The active-site Nucleophile is serine 272. Residues aspartate 295 and histidine 350 each act as charge relay system in the active site.

It belongs to the AB hydrolase superfamily. Lipase family. N-glycosylated. As to expression, plasma.

It is found in the secreted. It localises to the extracellular space. The catalysed reaction is a 1-O-alkyl-2-acetyl-sn-glycero-3-phosphocholine + H2O = a 1-O-alkyl-sn-glycero-3-phosphocholine + acetate + H(+). It catalyses the reaction 1-O-decyl-2-acetyl-sn-glycero-3-phosphocholine + H2O = 1-O-decyl-sn-glycero-3-phosphocholine + acetate + H(+). It carries out the reaction 1-O-dodecyl-2-acetyl-sn-glycero-3-phosphocholine + H2O = 1-O-dodecyl-sn-glycero-3-phosphocholine + acetate + H(+). The enzyme catalyses 1-O-tetradecyl-2-acetyl-sn-glycero-3-phosphocholine + H2O = 1-O-tetradecyl-sn-glycero-3-phosphocholine + acetate + H(+). The catalysed reaction is 1-O-hexadecyl-2-acetyl-sn-glycero-3-phosphocholine + H2O = 1-O-hexadecyl-sn-glycero-3-phosphocholine + acetate + H(+). It catalyses the reaction 1-O-octadecyl-2-acetyl-sn-glycero-3-phosphocholine + H2O = 1-O-octadecyl-sn-glycero-3-phosphocholine + acetate + H(+). It carries out the reaction 1-hexadecanoyl-2-acetyl-sn-glycero-3-phosphocholine + H2O = 1-hexadecanoyl-sn-glycero-3-phosphocholine + acetate + H(+). The enzyme catalyses 1-hexadecanoyl-2-propionyl-sn-glycero-3-phosphocholine + H2O = propanoate + 1-hexadecanoyl-sn-glycero-3-phosphocholine + H(+). The catalysed reaction is 1-hexadecanoyl-2-butanoyl-sn-glycero-3-phosphocholine + H2O = butanoate + 1-hexadecanoyl-sn-glycero-3-phosphocholine + H(+). It catalyses the reaction 1-hexadecanoyl-2-pentanoyl-sn-glycero-3-phosphocholine + H2O = pentanoate + 1-hexadecanoyl-sn-glycero-3-phosphocholine + H(+). It carries out the reaction 1-hexadecanoyl-2-glutaroyl-sn-glycero-3-phosphocholine + H2O = glutarate + 1-hexadecanoyl-sn-glycero-3-phosphocholine + H(+). The enzyme catalyses 1-hexadecanoyl-2-(5-oxopentanoyl)-sn-glycero-3-phosphocholine + H2O = 5-oxopentanoate + 1-hexadecanoyl-sn-glycero-3-phosphocholine + H(+). The catalysed reaction is 1-hexadecanoyl-2-(9-oxononanoyl)-sn-glycero-3-phosphocholine + H2O = 9-oxononanoate + 1-hexadecanoyl-sn-glycero-3-phosphocholine + H(+). It catalyses the reaction 1-hexadecanoyl-2-[9-hydroperoxy-(10E-octadecenoyl)]-sn-glycero-3-phosphocholine + H2O = 9-hydroperoxy-10E-octadecenoate + 1-hexadecanoyl-sn-glycero-3-phosphocholine + H(+). It carries out the reaction 1-hexadecanoyl-2-(10-hydroperoxy-8E-octadecenoyl)-sn-glycero-3-phosphocholine + H2O = 10-hydroperoxy-(8E)-octadecenoate + 1-hexadecanoyl-sn-glycero-3-phosphocholine + H(+). Lipoprotein-associated calcium-independent phospholipase A2 involved in phospholipid catabolism during inflammatory and oxidative stress response. At the lipid-aqueous interface, hydrolyzes the ester bond of fatty acyl group attached at sn-2 position of phospholipids (phospholipase A2 activity). Specifically targets phospholipids with a short-chain fatty acyl group at sn-2 position. Can hydrolyze phospholipids with long fatty acyl chains, only if they carry oxidized functional groups. Hydrolyzes and inactivates platelet-activating factor (PAF, 1-O-alkyl-2-acetyl-sn-glycero-3-phosphocholine), a potent pro-inflammatory signaling lipid that acts through PTAFR on various innate immune cells. Hydrolyzes oxidatively truncated phospholipids carrying an aldehyde group at omega position, preventing their accumulation in lipoprotein particles and uncontrolled pro-inflammatory effects. As part of high-density lipoprotein (HDL) particles, can hydrolyze phospholipids having long-chain fatty acyl hydroperoxides at sn-2 position and protect against potential accumulation of these oxylipins in the vascular wall. Catalyzes the release from membrane phospholipids of F2-isoprostanes, lipid biomarkers of cellular oxidative damage. This Mus musculus (Mouse) protein is Platelet-activating factor acetylhydrolase (Pla2g7).